Reading from the N-terminus, the 152-residue chain is Nucleoside diphosphate kinase A (152 aa).

Residues K12, F60, R88, and T94 each contribute to the ATP site. K100 is covalently cross-linked (Glycyl lysine isopeptide (Lys-Gly) (interchain with G-Cter in ubiquitin)). ATP is bound by residues R105 and N115. The active-site Pros-phosphohistidine intermediate is H118. Phosphoserine is present on residues S120 and S122. Residue K124 is modified to N6-acetyllysine. A Phosphoserine modification is found at S125.

Belongs to the NDK family. As to quaternary structure, hexamer of two different chains: An and B (A6, A5B, A4B2, A3B3, A2B4, AB5, B6). Interacts with PRUNE1. Component of the SET complex, composed of at least ANP32A, APEX1, HMGB2, NME1, SET and TREX1. Within this complex, interacts directly with SET. Also interacts with TREX1, but only following translocation to the nucleus. Mg(2+) is required as a cofactor.

The protein resides in the cytoplasm. It is found in the nucleus. It carries out the reaction a 2'-deoxyribonucleoside 5'-diphosphate + ATP = a 2'-deoxyribonucleoside 5'-triphosphate + ADP. The enzyme catalyses a ribonucleoside 5'-diphosphate + ATP = a ribonucleoside 5'-triphosphate + ADP. Its activity is regulated as follows. Autophosphorylation at His-118 increases serine/threonine protein kinase activity of the enzyme. Interaction with the SET complex inhibits exonuclease activity. Major role in the synthesis of nucleoside triphosphates other than ATP. The ATP gamma phosphate is transferred to the NDP beta phosphate via a ping-pong mechanism, using a phosphorylated active-site intermediate. Possesses nucleoside-diphosphate kinase, serine/threonine-specific protein kinase, geranyl and farnesyl pyrophosphate kinase, histidine protein kinase and 3'-5' exonuclease activities. Involved in cell proliferation, differentiation and development, signal transduction, G protein-coupled receptor endocytosis, and gene expression. Required for neural development including neural patterning and cell fate determination. During GZMA-mediated cell death, works in concert with TREX1. NME1 nicks one strand of DNA and TREX1 removes bases from the free 3' end to enhance DNA damage and prevent DNA end reannealing and rapid repair. In Mus musculus (Mouse), this protein is Nucleoside diphosphate kinase A (Nme1).